A 557-amino-acid polypeptide reads, in one-letter code: Transcription factor fil1 (557 aa).

The segment at Ser234–Gly258 is disordered. Residues Ser243–Gly258 are compositionally biased toward low complexity. 2 consecutive GATA-type zinc fingers follow at residues Cys365–Cys390 and Cys419–Cys443.

It is found in the nucleus. The protein localises to the cytoplasm. Its function is as follows. Activates genes required for amino acid biosynthesis and acts as a master transcriptional regulator during amino acid starvation. Binds variations of the DNA sequence 5'-GAT[AC]GC-3'. In Schizosaccharomyces pombe (strain 972 / ATCC 24843) (Fission yeast), this protein is Transcription factor fil1.